A 371-amino-acid polypeptide reads, in one-letter code: Glutamate 5-kinase 2 (371 aa).

Lys13 is an ATP binding site. Substrate-binding residues include Ser53, Asp140, and Asn152. Residues 172–173 and 214–220 contribute to the ATP site; these read SD and TGGMRSK. A PUA domain is found at 280-356; sequence EGEMILSDDC…KELTNRALID (77 aa).

This sequence belongs to the glutamate 5-kinase family.

The protein localises to the cytoplasm. The enzyme catalyses L-glutamate + ATP = L-glutamyl 5-phosphate + ADP. It functions in the pathway amino-acid biosynthesis; L-proline biosynthesis; L-glutamate 5-semialdehyde from L-glutamate: step 1/2. In terms of biological role, catalyzes the transfer of a phosphate group to glutamate to form L-glutamate 5-phosphate. The polypeptide is Glutamate 5-kinase 2 (proJ) (Bacillus subtilis (strain 168)).